Here is a 182-residue protein sequence, read N- to C-terminus: Mesencephalic astrocyte-derived neurotrophic factor (182 aa).

The signal sequence occupies residues 1-24 (MRRMWATQGLAVALALSVLPGSRA). Cystine bridges form between Cys30–Cys117, Cys33–Cys106, Cys64–Cys75, and Cys151–Cys154. Tyr76 carries the phosphotyrosine modification. Residues 96–158 (LAHHIPVEKI…ETCKGCAEKS (63 aa)) form an interacts with ERN1, EIF2AK3 and ATF6 region. Residues 129–172 (TVDLKKLRVKELKKILDDWGETCKGCAEKSDYIRKINELMPKYA) are interacts with HSPA5.

Belongs to the ARMET family. In terms of assembly, interacts directly (via SAP domain) with HSPA5/BiP; the interaction inhibits ATP binding to HSPA5/BiP and subsequent nucleotide exchange. Component of a complex containing at least CRELD2, MANF, MATN3 and PDIA4. Interacts (via C-terminus) with ERN1 (via luminal domain); the interaction is decreased in the presence of increasing concentrations of Ca(2+). Post-translationally, may contain sialic acid residues.

The protein resides in the secreted. It is found in the endoplasmic reticulum lumen. The protein localises to the sarcoplasmic reticulum lumen. Selectively promotes the survival of dopaminergic neurons of the ventral mid-brain. Modulates GABAergic transmission to the dopaminergic neurons of the substantia nigra. Enhances spontaneous, as well as evoked, GABAergic inhibitory postsynaptic currents in dopaminergic neurons. Inhibits cell proliferation and endoplasmic reticulum (ER) stress-induced cell death. Retained in the ER/sarcoplasmic reticulum (SR) through association with the endoplasmic reticulum chaperone protein HSPA5 under normal conditions. Stabilizes HSPA5/BiP in its substrate-bound ADP state, which facilitates HSPA5/BiP incorporation into chaperone-client complexes during endoplasmic reticulum stress, its interaction with HSPA5/BiP inhibits ATP binding to HSPA5/BiP and subsequent nucleotide exchange. As a result acts as a repressor of the unfolded protein response (UPR) pathway. Up-regulated and secreted by the ER/SR in response to ER stress and hypoxia. Following secretion by the ER/SR, directly binds to 3-O-sulfogalactosylceramide, a lipid sulfatide in the outer cell membrane of target cells. Sulfatide binding promotes its cellular uptake by endocytosis, and is required for its role in alleviating ER stress and cell toxicity under hypoxic and ER stress conditions. Essential for embryonic lung development. Required for the correct postnatal temporal and structural development of splenic white pulp. Required for the repair-associated myeloid response in skeletal muscle, acts as a regulator of phenotypic transition towards prorepair macrophages in response to muscle injury and as a result limits excessive proinflammatory signaling. Represses RELA expression and therefore NF-kB signaling in the myocardium, as a result limits macrophage infiltration of injured tissue and M1 macrophage differentiation in response to myocardial injury. Required for endochondral ossification in long bones and the skull during postnatal development. This Homo sapiens (Human) protein is Mesencephalic astrocyte-derived neurotrophic factor.